We begin with the raw amino-acid sequence, 358 residues long: Glucose 1-dehydrogenase (358 aa).

C38 serves as a coordination point for Zn(2+). A substrate-binding site is contributed by T40. Zn(2+) contacts are provided by H65, E66, C92, C95, C98, and C106. Residues E113, E149, and N153 each coordinate substrate. E149 serves as a coordination point for Zn(2+). Residues 187-190 (SGPI), 209-211 (NRR), 268-270 (FGT), 296-298 (SVN), and K342 contribute to the NADP(+) site. N298 is a binding site for substrate.

It belongs to the zinc-containing alcohol dehydrogenase family. Glucose 1-dehydrogenase subfamily. The cofactor is Zn(2+).

The catalysed reaction is D-glucose + NAD(+) = D-glucono-1,5-lactone + NADH + H(+). The enzyme catalyses D-glucose + NADP(+) = D-glucono-1,5-lactone + NADPH + H(+). Functionally, catalyzes the NAD(P)(+)-dependent oxidation of D-glucose to D-gluconate via gluconolactone. Can utilize both NAD(+) and NADP(+) as electron acceptor. Is involved in the degradation of glucose through a non-phosphorylative variant of the Entner-Doudoroff pathway. The polypeptide is Glucose 1-dehydrogenase (Metallosphaera sedula (strain ATCC 51363 / DSM 5348 / JCM 9185 / NBRC 15509 / TH2)).